Consider the following 244-residue polypeptide: RNA transcription, translation and transport factor protein (244 aa).

An N6-acetyllysine mark is found at Lys-20, Lys-62, and Lys-98.

The protein belongs to the RTRAF family. As to quaternary structure, homodimer. Interacts with FAM98A (via N- and C-terminus). Interacts with NIN; which may prevent phosphorylation of NIN. Interacts with POLR2A. Component of a tRNA-splicing ligase complex with FAM98B, DDX1 and RTCB. In terms of assembly, (Microbial infection) Interacts with influenza A virus (IAV) RNA polymerase subunits PA, PB1 and PB2, and nucleocapsid NP. Associates with IAV polymerase complexes both in the nucleus and cytosol. Associates with IAV ribonucleoproteins (vRNP) packaged in virions. Interacts with hepatitis C virus core protein p19. As to expression, widely expressed. Expressed at high level in heart and skeletal muscle. Expressed at intermediate level in liver, pancreas, fetal brain and fetal lung. Weakly expressed in adult brain, adult lung, placenta, fetal liver and fetal kidney. Overexpressed in many brain tumors.

The protein resides in the nucleus. Its subcellular location is the cytoplasm. It is found in the cytosol. The protein localises to the perinuclear region. It localises to the cytoskeleton. The protein resides in the microtubule organizing center. Its subcellular location is the centrosome. RNA-binding protein involved in modulation of mRNA transcription by Polymerase II. Component of the tRNA-splicing ligase complex and is required for tRNA ligation. May be required for RNA transport. Its function is as follows. (Microbial infection) In case of infection by influenza virus A (IVA), is involved in viral replication. The chain is RNA transcription, translation and transport factor protein from Homo sapiens (Human).